The sequence spans 631 residues: MSATKLTRREQRAQAQHFIDTLEGSAFPNSKRIYITGTHPGVRVPMREIQLSPTLIGGSKEQPQYEENEAIPVYDTSGPYGDPQIAINVQQGLAKLRQPWIDARGDTEELTVRSSDYTKARLADDGLDELRFSGVLTPKRAKAGHRVTQLHYARKGIITPEMEFIAIRENMGRERIRSEVLRHQHPGMSFGARLPENITAEFVRDEVAAGRAIIPANINHPESEPMIIGRNFLVKVNANIGNSAVTSSIEEEVEKLVWSTRWGADTVMDLSTGRYIHETREWILRNSPVPIGTVPIYQALEKVNGIAEDLTWEVFRDTLLEQAEQGVDYFTIHAGVLLRYVPMTAKRLTGIVSRGGSIMAKWCLSHHQENFLYQHFREICEICAAYDVSLSLGDGLRPGSIQDANDEAQFAELHTLGELTKIAWEYDVQVMIEGPGHVPMQMIRRNMTEELEHCHEAPFYTLGPLTTDIAPGYDHFTSGIGAAMIGWFGCAMLCYVTPKEHLGLPNKEDVKQGLITYKIAAHAADLAKGHPGAQIRDNAMSKARFEFRWEDQFNLALDPFTARAYHDETLSQESGKVAHFCSMCGPKFCSMKISQEVRDYAAAQTIEVGMADMSENFRARGGEIYLRKEEA.

Residues asparagine 239, methionine 268, tyrosine 297, histidine 333, 353–355, 394–397, and glutamate 433 contribute to the substrate site; these read SRG and DGLR. Histidine 437 contributes to the Zn(2+) binding site. Residue tyrosine 460 coordinates substrate. Histidine 501 provides a ligand contact to Zn(2+). Residues cysteine 581, cysteine 584, and cysteine 589 each coordinate [4Fe-4S] cluster.

Belongs to the ThiC family. Homodimer. [4Fe-4S] cluster is required as a cofactor.

The catalysed reaction is 5-amino-1-(5-phospho-beta-D-ribosyl)imidazole + S-adenosyl-L-methionine = 4-amino-2-methyl-5-(phosphooxymethyl)pyrimidine + CO + 5'-deoxyadenosine + formate + L-methionine + 3 H(+). It functions in the pathway cofactor biosynthesis; thiamine diphosphate biosynthesis. Its function is as follows. Catalyzes the synthesis of the hydroxymethylpyrimidine phosphate (HMP-P) moiety of thiamine from aminoimidazole ribotide (AIR) in a radical S-adenosyl-L-methionine (SAM)-dependent reaction. The sequence is that of Phosphomethylpyrimidine synthase from Escherichia coli O81 (strain ED1a).